The chain runs to 194 residues: Small ribosomal subunit protein uS5 (194 aa).

The S5 DRBM domain maps to L26 to V89.

Belongs to the universal ribosomal protein uS5 family. In terms of assembly, part of the 30S ribosomal subunit. Contacts proteins S4 and S8.

Functionally, with S4 and S12 plays an important role in translational accuracy. Its function is as follows. Located at the back of the 30S subunit body where it stabilizes the conformation of the head with respect to the body. The protein is Small ribosomal subunit protein uS5 of Persephonella marina (strain DSM 14350 / EX-H1).